A 709-amino-acid chain; its full sequence is Elongation factor G (709 aa).

Residues 8-290 form the tr-type G domain; it reads NRYRNIGISA…AVIQYMPAPQ (283 aa). Residues 17 to 24, 88 to 92, and 142 to 145 contribute to the GTP site; these read AHIDAGKT, DTPGH, and NKMD.

The protein belongs to the TRAFAC class translation factor GTPase superfamily. Classic translation factor GTPase family. EF-G/EF-2 subfamily.

It is found in the cytoplasm. Its function is as follows. Catalyzes the GTP-dependent ribosomal translocation step during translation elongation. During this step, the ribosome changes from the pre-translocational (PRE) to the post-translocational (POST) state as the newly formed A-site-bound peptidyl-tRNA and P-site-bound deacylated tRNA move to the P and E sites, respectively. Catalyzes the coordinated movement of the two tRNA molecules, the mRNA and conformational changes in the ribosome. This Psychrobacter sp. (strain PRwf-1) protein is Elongation factor G.